Here is a 2159-residue protein sequence, read N- to C-terminus: Calpain-type cysteine protease DEK1 (2159 aa).

Residues Met1 to Ala33 form the signal peptide. Topologically, residues Val34 to Ala70 are extracellular. The chain crosses the membrane as a helical span at residues Trp71–Leu91. The Cytoplasmic portion of the chain corresponds to Met92 to Asn95. Residues Ile96–Met116 traverse the membrane as a helical segment. Over Leu117–Glu127 the chain is Extracellular. The helical transmembrane segment at Ala128 to Ile148 threads the bilayer. Residues Tyr149–Gly164 lie on the Cytoplasmic side of the membrane. The chain crosses the membrane as a helical span at residues Phe165–Leu185. Residues Phe186–His236 lie on the Extracellular side of the membrane. Residues Leu237–Leu257 traverse the membrane as a helical segment. Residues Thr258 to Trp264 are Cytoplasmic-facing. A helical membrane pass occupies residues Leu265–Phe285. Residues Arg286–Met294 are Extracellular-facing. The helical transmembrane segment at Ile295–Trp315 threads the bilayer. Residues Tyr316–Cys320 lie on the Cytoplasmic side of the membrane. A helical transmembrane segment spans residues Ile321–Ile341. The Extracellular portion of the chain corresponds to Ser342–Pro623. Residues Arg365–Asp409 are disordered. A compositionally biased stretch (low complexity) spans Asn369 to Ser381. A compositionally biased stretch (polar residues) spans Val382–Asp409. A helical transmembrane segment spans residues Ile624 to Tyr644. The Cytoplasmic segment spans residues Arg645–Glu660. A helical membrane pass occupies residues Phe661–Ser681. The Extracellular portion of the chain corresponds to Leu682–Gln694. The chain crosses the membrane as a helical span at residues Lys695–Ser715. Topologically, residues Lys716–Val719 are cytoplasmic. Residues Ile720 to Ile740 traverse the membrane as a helical segment. Over Trp741–Arg770 the chain is Extracellular. The chain crosses the membrane as a helical span at residues Ala771–Val791. Residues Ser792–Gly822 lie on the Cytoplasmic side of the membrane. A helical transmembrane segment spans residues Trp823 to Phe843. Over Ala844–Ala853 the chain is Extracellular. Residues Ile854 to Val874 form a helical membrane-spanning segment. The Cytoplasmic portion of the chain corresponds to Val875 to Asp887. A helical membrane pass occupies residues Phe888–Leu908. Topologically, residues Tyr909–Gly921 are extracellular. A helical transmembrane segment spans residues Val922–Val942. The Cytoplasmic segment spans residues Thr943–Pro946. Residues Trp947–Ile967 traverse the membrane as a helical segment. At His968–Gln981 the chain is on the extracellular side. Residues Met982–Phe1002 form a helical membrane-spanning segment. Residues His1003 to Ser1016 lie on the Cytoplasmic side of the membrane. A helical transmembrane segment spans residues Phe1017 to Tyr1037. The Extracellular segment spans residues Ser1038 to Ala1060. Residues Phe1061–Ile1081 form a helical membrane-spanning segment. Residues Met1082 to Val2159 are Cytoplasmic-facing. A phosphoserine mark is found at Ser1371 and Ser1376. The 193-residue stretch at Thr1417 to Asp1609 folds into the Calpain catalytic 1 domain. Ser1665 bears the Phosphoserine mark. In terms of domain architecture, Calpain catalytic 2 spans Asn1703–Tyr2005. Catalysis depends on residues Cys1769, His1927, and Asn1947.

This sequence belongs to the peptidase C2 family. Autocatalytic proteolytic cleavage leading to the production of mainly cytoplasmic localized subproducts of about 85 and 120 kDa. As to expression, expressed in most tissues at low levels ranging from 30 to 55 ppm. Present in all endosperm cells at transcript level, but confined to aleurones at protein level.

Its subcellular location is the endoplasmic reticulum membrane. It is found in the cytoplasm. The protein resides in the cell membrane. It localises to the endosome membrane. Its function is as follows. Essential protease involved in epiderm development. Required for aleurone cell development in the endosperm probably by maintaining and restricting the aleurone and embryonic epidermal L1 cell-layer fates as well as meristems organization. Involved in the maintenance of adaxial/abaxial axis information in developing leaves, probably by regulating cell proliferation and expansion. Does not need calcium ions to be active. The chain is Calpain-type cysteine protease DEK1 (DEK1) from Zea mays (Maize).